Consider the following 361-residue polypeptide: Porphobilinogen deaminase (361 aa).

Cysteine 265 carries the post-translational modification S-(dipyrrolylmethanemethyl)cysteine. The tract at residues 341 to 361 is disordered; sequence LPPSSNTPTPQPITPITTNNS.

It belongs to the HMBS family. Dipyrromethane is required as a cofactor.

The catalysed reaction is 4 porphobilinogen + H2O = hydroxymethylbilane + 4 NH4(+). The protein operates within porphyrin-containing compound metabolism; protoporphyrin-IX biosynthesis; coproporphyrinogen-III from 5-aminolevulinate: step 2/4. Functionally, tetrapolymerization of the monopyrrole PBG into the hydroxymethylbilane pre-uroporphyrinogen in several discrete steps. This Debaryomyces hansenii (strain ATCC 36239 / CBS 767 / BCRC 21394 / JCM 1990 / NBRC 0083 / IGC 2968) (Yeast) protein is Porphobilinogen deaminase (HEM3).